A 1663-amino-acid chain; its full sequence is Complement C3 (1663 aa).

Positions 1 to 22 are cleaved as a signal peptide; the sequence is MGPTSGPSLLLLLLTHLPLALG. Phosphoserine; by FAM20C is present on residues Ser38 and Ser70. An N-linked (GlcNAc...) asparagine glycan is attached at Asn85. Phosphoserine; by FAM20C occurs at positions 297 and 303. 13 disulfides stabilise this stretch: Cys559–Cys816, Cys627–Cys662, Cys693–Cys720, Cys694–Cys727, Cys707–Cys728, Cys873–Cys1513, Cys1101–Cys1158, Cys1358–Cys1489, Cys1389–Cys1458, Cys1506–Cys1511, Cys1518–Cys1590, Cys1537–Cys1661, and Cys1637–Cys1646. Ser672 carries the phosphoserine; by FAM20C modification. One can recognise an Anaphylatoxin-like domain in the interval 693–728; that stretch reads CCEDGMRENPMRFSCQRRTRFISLGEACKKVFLDCC. N-linked (GlcNAc...) asparagine glycosylation occurs at Asn939. The interval 954-973 is disordered; the sequence is REGVQKEDIPPADLSDQVPD. Ser968 carries the post-translational modification Phosphoserine; by FAM20C. The segment at residues 1010 to 1013 is a cross-link (isoglutamyl cysteine thioester (Cys-Gln)); sequence CGEQ. The residue at position 1321 (Ser1321) is a Phosphoserine; by FAM20C. Residues 1518–1661 enclose the NTR domain; the sequence is CFIQKSDDKV…FTESMVVFGC (144 aa). At Ser1573 the chain carries Phosphoserine; by FAM20C. Asn1617 carries an N-linked (GlcNAc...) asparagine glycan. The segment at 1634 to 1659 is interaction with CFP/properdin; that stretch reads EDECQDEENQKQCQDLGAFTESMVVF.

In terms of assembly, in absence of complement activation, the C3 precursor is first processed by the removal of 4 Arg residues, forming two chains, beta and alpha, linked by a disulfide bond. As to quaternary structure, complement C3b is composed of complement C3b and complement C3 beta chains that are associated via disulfide bonds. Non-enzymatic component of the C5 convertase, also named C4bC2bC3b, composed of the serine protease complement C2b (C2), complement C3b, as well as complement C4b (C4). Non-enzymatic component of the C5 convertase of the alternative complement pathways composed of the serine protease complement CFB and complement C3b. Interacts with CFP; interaction takes place together with CFB in the alternative complement system and allows the complex to become active. Interacts with CR1 (via Sushi 8 and Sushi 9 domains). Interacts with CFH. Interacts with CFH. Interacts with CR2. In terms of assembly, during pregnancy, C3dg exists as a complex (probably a 2:2:2 heterohexamer) with AGT and the proform of PRG2. Interacts with CR2 (via the N-terminal Sushi domains 1 and 2). As to quaternary structure, (Microbial infection) C3b interacts with herpes simplex virus 1 (HHV-1) and herpes simplex virus 2 (HHV-2) envelope glycoprotein C; this interaction inhibits the activation of the complement system. (Microbial infection) Interacts with Staphylococcus aureus immunoglobulin-binding protein Sbi; this interaction prevents the association between C3dg and CR2. In terms of assembly, (Microbial infection) Interacts with Staphylococcus aureus protein Fib. In terms of processing, C3 precursor is first processed by the removal of 4 Arg residues, forming two chains, beta and alpha, linked by a disulfide bond. During activation of the complement systems, the alpha chain is cleaved into C3a and C3b by the C3 convertase: C3b stays linked to the beta chain, while C3a is released in the plasma. The alpha chain is cleaved by the serine protease complement C2b component of the C3 convertase to generate C3a and C3b following activation by the classical, lectin and GZMK complement systems. The alpha chain is cleaved by CFB component of the C3 convertase to generate C3a and C3b following activation by the alternative complement system. Post-translationally, C3a is further processed by carboxypeptidases to release the C-terminal arginine residue generating the acylation stimulating protein (ASP). Levels of ASP are increased in adipocytes in the postprandial period and by insulin and dietary chylomicrons. Complement C3b is rapidly split in two positions by factor I (CFI) and a cofactor (CFH) to form iC3b (inactivated C3b) and C3f which is released. CFI and CFH catalyze proteolytic degradation of already-deposited complement C3b. Then iC3b is slowly cleaved (possibly by CFI) to form C3c (beta chain + alpha' chain fragment 1 + alpha' chain fragment 2), C3dg and C3f. Other proteases produce other fragments such as C3d or C3g. In terms of processing, upon activation, the internal thioester bond reacts with carbohydrate antigens on the target surface to form amide or ester bonds, leading to covalent association with the surface of pathogens. Post-translationally, complement C3b interacts with complement C4b via a thioester linkage. Phosphorylated by FAM20C in the extracellular medium. In terms of processing, (Microbial infection) C3 is cleaved by Staphylococcus aureus aureolysin; this cleavage renders C3a and C3b inactive. C3b is rapidly degraded by host factors CFH and CFI preventing its deposition on the bacterial surface while C3a is further inactivated by aureolysin. Post-translationally, (Microbial infection) Complement C3 beta chain is cleaved and inactivated by S.pyogenes SpeB. (Microbial infection) Cleaved by N.meningitidis NalP between Leu-744 and Gly-745, generating a slightly shorter C3 alpha form and a slightly longer C3 beta form. The C3b-like fragment is degraded in the presence of the complement regulators CFH and CFI, preventing its deposition on the bacterial surface. Plasma. As to expression, produced in adipocytes and released into the plasma during both the fasting and postprandial periods.

The protein resides in the secreted. The protein localises to the cell surface. With respect to regulation, complement activation is inhibited by VSIG4. In terms of biological role, precursor of non-enzymatic components of the classical, alternative, lectin and GZMK complement pathways, which consist in a cascade of proteins that leads to phagocytosis and breakdown of pathogens and signaling that strengthens the adaptive immune system. Its function is as follows. Non-enzymatic component of C5 convertase. Generated following cleavage by C3 convertase, it covalently attaches to the surface of pathogens, where it acts as an opsonin that marks the surface of antigens for removal. Complement C3b binds covalently via its reactive thioester, to cell surface carbohydrates or immune aggregates. Together with complement C4b, it then recruits the serine protease complement C2b to form the C5 convertase, which cleaves and activate C5, the next component of the complement pathways. In the alternative complement pathway, recruits the serine protease CFB to form the C5 convertase that cleaves and activates C5. Mediator of local inflammatory process released following cleavage by C3 convertase. Acts by binding to its receptor, C3AR1, activating G protein-coupled receptor signaling, promoting the phosphorylation, ARRB2-mediated internalization and endocytosis of C3AR1. C3a anaphylatoxin stimulates the activation of immune cells such as mast cells and basophilic leukocytes to release inflammation agents, such as cytokines, chemokines and histamine, which promote inflammation development. Also acts as potent chemoattractant for the migration of macrophages and neutrophils to the inflamed tissues, resulting in neutralization of the inflammatory triggers by multiple ways, such as phagocytosis and generation of reactive oxidants. Functionally, adipogenic hormone that stimulates triglyceride synthesis and glucose transport in adipocytes, regulating fat storage and playing a role in postprandial triglyceride clearance. Appears to stimulate triglyceride synthesis via activation of the PLC, MAPK and AKT signaling pathways. Acts by binding to its receptor, C5AR2, activating G protein-coupled receptor signaling, promoting the phosphorylation, ARRB2-mediated internalization and endocytosis of C5AR2. In terms of biological role, acts as a chemoattractant for neutrophils in chronic inflammation. In Homo sapiens (Human), this protein is Complement C3.